Consider the following 117-residue polypeptide: Gamma-aminobutyric acid receptor-associated protein-like 3 (117 aa).

Residues 1–22 are interaction with beta-tubulin; it reads MKFQYKEVHPFEYRKKEGEKIR. An interaction with GABRG2 region spans residues 36-68; the sequence is APKARVPDLDRRKYLVPSDLTDGQFYLLIRKRI. A lipid anchor (Phosphatidylethanolamine amidated glycine) is attached at glycine 116. A propeptide (removed in mature form) is located at residue lysine 117.

It belongs to the ATG8 family. Interacts with GABRG2 and beta-tubulin. The precursor molecule is cleaved by ATG4B to form the cytosolic form, GABARAPL3-I. This is activated by APG7L/ATG7, transferred to ATG3 and conjugated to phospholipid to form the membrane-bound form, GABARAPL3-II. ATG4B also mediates the delipidation required for GABARAPL1 recycling when autophagosomes fuse with lysosomes. As to expression, ubiquitous. Expressed at very high levels in the brain, heart, peripheral blood leukocytes, liver, kidney, placenta and skeletal muscle. Expressed at very low levels in thymus and small intestine.

The protein resides in the cytoplasm. It is found in the cytoskeleton. It localises to the cytoplasmic vesicle. The protein localises to the autophagosome membrane. In terms of biological role, ubiquitin-like modifier involved in autophagosome formation. Whereas LC3s are involved in elongation of the phagophore membrane, the GABARAP/GATE-16 subfamily is essential for a later stage in autophagosome maturation. This chain is Gamma-aminobutyric acid receptor-associated protein-like 3 (GABARAPL3), found in Homo sapiens (Human).